The primary structure comprises 998 residues: MSILDFPRIHFRGWARVNAPTANRDPHGHIDMASNTVAMAGEPFDLARHPTEFHRHLRSLGPRFGLDGRADPEGPFSLAEGYNAAGNNHFSWESATVSHVQWDGGEADRGDGLVGARLALWGHYNDYLRTTFNRARWVDSDPTRRDAAQIYAGQFTISPAGAGPGTPWLFTADIDDSHGARWTRGGHIAERGGHFLDEEFGLARLFQFSVPKDHPHFLFHPGPFDSEAWRRLQLALEDDDVLGLTVQYALFNMSTPPQPNSPVFHDMVGVVGLWRRGELASYPAGRLLRPRQPGLGDLTLRVSGGRVALNLACAIPFSTRAAQPSAPDRLTPDLGAKLPLGDLLLRDEDGALLARVPQALYQDYWTNHGIVDLPLLREPRGSLTLSSELAEWREQDWVTQSDASNLYLEAPDRRHGRFFPESIALRSYFRGEARARPDIPHRIEGMGLVGVESRQDGDAAEWRLTGLRPGPARIVLDDGAEAIPLRVLPDDWALDDATVEEVDYAFLYRHVMAYYELVYPFMSDKVFSLADRCKCETYARLMWQMCDPQNRNKSYYMPSTRELSAPKARLFLKYLAHVEGQARLQAPPPAGPARIESKAQLAAELRKAVDLELSVMLQYLYAAYSIPNYAQGQQRVRDGAWTAEQLQLACGSGDRRRDGGIRAALLEIAHEEMIHYLVVNNLLMALGEPFYAGVPLMGEAARQAFGLDTEFALEPFSESTLARFVRLEWPHFIPAPGKSIADCYAAIRQAFLDLPDLFGGEAGKRGGEHHLFLNELTNRAHPGYQLEVFDRDSALFGIAFVTDQGEGGALDSPHYEHSHFQRLREMSARIMAQSAPFEPALPALRNPVLDESPGCQRVADGRARALMALYQGVYELMFAMMAQHFAVKPLGSLRRSRLMNAAIDLMTGLLRPLSCALMNLPSGIAGRTAGPPLPGPVDTRSYDDYALGCRMLARRCERLLEQASMLEPGWLPDAQMELLDFYRRQMLDLACGKLSREA.

The enzyme catalyses 2 H2O2 = O2 + 2 H2O. The catalysed reaction is 2 2-iminio-3-(indol-3-yl)propanoate + H2O2 = indole-3-pyruvate imine dimer + 2 H2O. It participates in pigment biosynthesis; violacein biosynthesis. In terms of biological role, catalyzes the hydrogen peroxide-dependent dimerization of two L-tryptophan-derived molecules (imine form of indole 3-pyruvate (IPA)), to form an uncharacterized product suggested to be indole-3-pyruvate imine dimer that can spontaneously convert into dichlorochromopyrrolate (CPA). The uncharacterized product is the substrate of VioE. The sequence is that of 2-imino-3-(indol-3-yl)propanoate dimerase (vioB) from Chromobacterium violaceum (strain ATCC 12472 / DSM 30191 / JCM 1249 / CCUG 213 / NBRC 12614 / NCIMB 9131 / NCTC 9757 / MK).